Here is a 319-residue protein sequence, read N- to C-terminus: Malate dehydrogenase (319 aa).

NAD(+) contacts are provided by residues 10–15 and D34; that span reads GAGNIG. Substrate is bound by residues R83 and R89. NAD(+) is bound by residues N96 and 119–121; that span reads ITN. The substrate site is built by N121 and R152. H176 functions as the Proton acceptor in the catalytic mechanism.

The protein belongs to the LDH/MDH superfamily. MDH type 3 family.

The catalysed reaction is (S)-malate + NAD(+) = oxaloacetate + NADH + H(+). Functionally, catalyzes the reversible oxidation of malate to oxaloacetate. The protein is Malate dehydrogenase of Francisella tularensis subsp. mediasiatica (strain FSC147).